Reading from the N-terminus, the 399-residue chain is Acetate kinase (399 aa).

Mg(2+) is bound at residue Asn-7. Lys-14 is a binding site for ATP. Position 91 (Arg-91) interacts with substrate. Asp-148 functions as the Proton donor/acceptor in the catalytic mechanism. ATP contacts are provided by residues 208–212 (HLGNG), 283–285 (DFR), and 331–335 (GLGEN). Residue Glu-384 coordinates Mg(2+).

Belongs to the acetokinase family. In terms of assembly, homodimer. Mg(2+) is required as a cofactor. The cofactor is Mn(2+).

The protein localises to the cytoplasm. The enzyme catalyses acetate + ATP = acetyl phosphate + ADP. Its pathway is metabolic intermediate biosynthesis; acetyl-CoA biosynthesis; acetyl-CoA from acetate: step 1/2. Its function is as follows. Catalyzes the formation of acetyl phosphate from acetate and ATP. Can also catalyze the reverse reaction. This chain is Acetate kinase, found in Desulfitobacterium hafniense (strain Y51).